The chain runs to 474 residues: Bifunctional protein HldE (474 aa).

The interval 1 to 318 (MKVTLPDFNK…ENAIRGRADN (318 aa)) is ribokinase. 195–198 (NMSE) contacts ATP. Aspartate 264 is a catalytic residue. A cytidylyltransferase region spans residues 344–474 (MTNGCFDILH…TNIINAIKKK (131 aa)).

It in the N-terminal section; belongs to the carbohydrate kinase PfkB family. The protein in the C-terminal section; belongs to the cytidylyltransferase family. As to quaternary structure, homodimer.

It carries out the reaction D-glycero-beta-D-manno-heptose 7-phosphate + ATP = D-glycero-beta-D-manno-heptose 1,7-bisphosphate + ADP + H(+). The enzyme catalyses D-glycero-beta-D-manno-heptose 1-phosphate + ATP + H(+) = ADP-D-glycero-beta-D-manno-heptose + diphosphate. It functions in the pathway nucleotide-sugar biosynthesis; ADP-L-glycero-beta-D-manno-heptose biosynthesis; ADP-L-glycero-beta-D-manno-heptose from D-glycero-beta-D-manno-heptose 7-phosphate: step 1/4. Its pathway is nucleotide-sugar biosynthesis; ADP-L-glycero-beta-D-manno-heptose biosynthesis; ADP-L-glycero-beta-D-manno-heptose from D-glycero-beta-D-manno-heptose 7-phosphate: step 3/4. Its function is as follows. Catalyzes the phosphorylation of D-glycero-D-manno-heptose 7-phosphate at the C-1 position to selectively form D-glycero-beta-D-manno-heptose-1,7-bisphosphate. Catalyzes the ADP transfer from ATP to D-glycero-beta-D-manno-heptose 1-phosphate, yielding ADP-D-glycero-beta-D-manno-heptose. The protein is Bifunctional protein HldE of Proteus mirabilis (strain HI4320).